The following is a 555-amino-acid chain: MSSDLEIARAAKLRPIATVADEAKIPAEALHSYGLHVAKIDTSLLPKKDRPAKLVLVTAINPTPAGEGKTTTTIGLGDALRRLGKACVIALREPSLGPCFGTKGGATGGGYAQIVPMERINLHLTGDFHAITSAHNLLAALIDNHLYWGAEPKIDSRKVAWRRVLDMNDRALRQIVVGLGGGGNGYPRETGFDITAASEIMAIFCLSKDLADLQQRLAQIIVAQDVNKQPVRADALQAVGAMTVLLKDALMPNLVQTLEGTPTFVHGGPFANIAHGCNSVAATLAAMQLGDYVVTEAGFGADLGAEKFLDIKCRQAGIAPSAAVIVATARALKSHGGVAPADLNKENLDALKAGLANLGRHIANVKKFGLPVVVAINHFLSDTEAEQELIAHTCRDEYGVEAIDCRHWAAGGKGALALAEKVIALVEGGTAQFKMLYEDTLPLIEKMRRIAQEIYGAADISLDAKAKKQLADIEAQGFGHFPVCVAKTQYSFAADPKLLGAPTGHIVPIREVRLSAGAGFVVMICGDIMTMPGLSRQPAAWKIGLDAQGNIEGLF.

Position 63–70 (63–70) interacts with ATP; the sequence is TPAGEGKT.

It belongs to the formate--tetrahydrofolate ligase family.

It catalyses the reaction (6S)-5,6,7,8-tetrahydrofolate + formate + ATP = (6R)-10-formyltetrahydrofolate + ADP + phosphate. It participates in one-carbon metabolism; tetrahydrofolate interconversion. This Beijerinckia indica subsp. indica (strain ATCC 9039 / DSM 1715 / NCIMB 8712) protein is Formate--tetrahydrofolate ligase.